Reading from the N-terminus, the 113-residue chain is 14 kDa zinc-binding protein (113 aa).

An HIT domain is found at 3–113; sequence IFGKIISKEI…GGRQMNWPPG (111 aa). The Histidine triad motif signature appears at 97–101; the sequence is HIHVH.

Homodimer.

The sequence is that of 14 kDa zinc-binding protein from Brassica juncea (Indian mustard).